The chain runs to 310 residues: MASELQRPDSMPCHNRQVNSTSSPSPEHLLAEDRVLDHAEENNAAMAKLTLLPGHAHSSVLSERDSPACCSTNLHSENHSDSSDSGNYDAPVGGDSLLGDCELSRQIGAQLKLLPMNDQIRELQTIIRDKTASRGDFMFSADRLIRLVVEEGLNQLPYKECMVTTPTGHKYEGVKFEKGNCGVSIMRSGEAMEQGLRDCCRSIRIGKILIQSDEETQRAKVYYAKFPPDIHRRKVLLMYPILSTGNTVIEAVKVLIEHGVQPSVIILLSLFSTPHGAKSIIQEFPEITILTTEVHPVAPTHFGQKYFGTD.

Disordered regions lie at residues 1 to 27 (MASE…PSPE) and 62 to 89 (SERD…GNYD). A compositionally biased stretch (polar residues) spans 16–25 (RQVNSTSSPS). Ser-25 is modified (phosphoserine). GTP-binding positions include Arg-134, Arg-143, and 177-180 (EKGN). Arg-187 contributes to the 5-phospho-alpha-D-ribose 1-diphosphate binding site. GTP contacts are provided by Arg-204 and Arg-233. Residue 239 to 247 (YPILSTGNT) coordinates 5-phospho-alpha-D-ribose 1-diphosphate. 300–302 (THF) contributes to the uracil binding site.

Belongs to the UPRTase family.

It localises to the cytoplasm. The protein resides in the nucleus. This chain is Uracil phosphoribosyltransferase homolog (Uprt), found in Mus musculus (Mouse).